The sequence spans 443 residues: Signal recognition particle 54 kDa protein (443 aa).

GTP contacts are provided by residues 104–111 (GLQGSGKT), 184–188 (DTAGR), and 242–245 (TKLD).

This sequence belongs to the GTP-binding SRP family. SRP54 subfamily. As to quaternary structure, part of the signal recognition particle protein translocation system, which is composed of SRP and FtsY. Archaeal SRP consists of a 7S RNA molecule of 300 nucleotides and two protein subunits: SRP54 and SRP19.

The protein localises to the cytoplasm. The enzyme catalyses GTP + H2O = GDP + phosphate + H(+). In terms of biological role, involved in targeting and insertion of nascent membrane proteins into the cytoplasmic membrane. Binds to the hydrophobic signal sequence of the ribosome-nascent chain (RNC) as it emerges from the ribosomes. The SRP-RNC complex is then targeted to the cytoplasmic membrane where it interacts with the SRP receptor FtsY. This is Signal recognition particle 54 kDa protein from Methanosarcina mazei (strain ATCC BAA-159 / DSM 3647 / Goe1 / Go1 / JCM 11833 / OCM 88) (Methanosarcina frisia).